We begin with the raw amino-acid sequence, 315 residues long: MGPFGARASPEAGQVVKQPLTDDPQESLAQGESERLPPRFATYFHIHLVSDSTGETLNAMARAVCARFTDILPIEHIYALVRSTRQLDRALEEIAGAPGVVMHTIVDPGLRAALEEGCRKLEMPCIAALDPVISAMSRYLGARISTRVGAQHALTNDYFDRIEALDYAIAHDDGQGGQDLTQADVILVGVSRTSKTPTCIYLAHRGVRAANVPLVPGRPPPPELFELKNTLIVGLITSPDRLIQIRRNRLLSLKENRESDYVDADAVRQEIIAARRLFERQNWPVIDITRRSVEETAAAVINLLSGGRGKVEVLG.

The interval 1–32 (MGPFGARASPEAGQVVKQPLTDDPQESLAQGE) is disordered. 189-196 (GVSRTSKT) is a binding site for ADP.

This sequence belongs to the pyruvate, phosphate/water dikinase regulatory protein family. PDRP subfamily.

The enzyme catalyses N(tele)-phospho-L-histidyl/L-threonyl-[pyruvate, phosphate dikinase] + ADP = N(tele)-phospho-L-histidyl/O-phospho-L-threonyl-[pyruvate, phosphate dikinase] + AMP + H(+). The catalysed reaction is N(tele)-phospho-L-histidyl/O-phospho-L-threonyl-[pyruvate, phosphate dikinase] + phosphate + H(+) = N(tele)-phospho-L-histidyl/L-threonyl-[pyruvate, phosphate dikinase] + diphosphate. Its function is as follows. Bifunctional serine/threonine kinase and phosphorylase involved in the regulation of the pyruvate, phosphate dikinase (PPDK) by catalyzing its phosphorylation/dephosphorylation. The chain is Putative pyruvate, phosphate dikinase regulatory protein from Caulobacter vibrioides (strain ATCC 19089 / CIP 103742 / CB 15) (Caulobacter crescentus).